Here is a 693-residue protein sequence, read N- to C-terminus: Pentatricopeptide repeat-containing protein At2g19280 (693 aa).

PPR repeat units lie at residues 200–234, 235–269, 270–304, 305–339, 340–370, 372–406, 407–441, 442–476, 477–511, 512–546, 547–581, 582–616, and 617–651; these read LETV…GIFP, SRGV…GRHL, NAAV…GIRP, DIVA…GISQ, DSVS…FRLR, NIFV…GLLP, DCVC…GNPP, SLTT…GLKL, DVVT…GISP, DVAT…GFVP, STLA…RMKP, DVVT…GLKP, and DVVL…GMLP.

It belongs to the PPR family. P subfamily.

The chain is Pentatricopeptide repeat-containing protein At2g19280 from Arabidopsis thaliana (Mouse-ear cress).